The sequence spans 458 residues: Argininosuccinate lyase (458 aa).

Belongs to the lyase 1 family. Argininosuccinate lyase subfamily.

It is found in the cytoplasm. It catalyses the reaction 2-(N(omega)-L-arginino)succinate = fumarate + L-arginine. Its pathway is amino-acid biosynthesis; L-arginine biosynthesis; L-arginine from L-ornithine and carbamoyl phosphate: step 3/3. The protein is Argininosuccinate lyase of Salmonella dublin (strain CT_02021853).